We begin with the raw amino-acid sequence, 390 residues long: Succinyl-diaminopimelate desuccinylase (390 aa).

A Zn(2+)-binding site is contributed by His74. Asp76 is an active-site residue. Residue Asp107 participates in Zn(2+) binding. The active-site Proton acceptor is the Glu140. Zn(2+) contacts are provided by Glu141, Glu169, and His363.

Belongs to the peptidase M20A family. DapE subfamily. In terms of assembly, homodimer. The cofactor is Zn(2+). Requires Co(2+) as cofactor.

The catalysed reaction is N-succinyl-(2S,6S)-2,6-diaminopimelate + H2O = (2S,6S)-2,6-diaminopimelate + succinate. Its pathway is amino-acid biosynthesis; L-lysine biosynthesis via DAP pathway; LL-2,6-diaminopimelate from (S)-tetrahydrodipicolinate (succinylase route): step 3/3. Its function is as follows. Catalyzes the hydrolysis of N-succinyl-L,L-diaminopimelic acid (SDAP), forming succinate and LL-2,6-diaminopimelate (DAP), an intermediate involved in the bacterial biosynthesis of lysine and meso-diaminopimelic acid, an essential component of bacterial cell walls. In Bartonella bacilliformis (strain ATCC 35685 / KC583 / Herrer 020/F12,63), this protein is Succinyl-diaminopimelate desuccinylase.